A 223-amino-acid chain; its full sequence is Cuticular glutathione peroxidase (223 aa).

The N-terminal stretch at 1-19 (MSAQLLILSHVVLLQLIVA) is a signal peptide. N-linked (GlcNAc...) asparagine glycosylation is present at asparagine 39. The active site involves cysteine 74. An N-linked (GlcNAc...) asparagine glycan is attached at asparagine 92.

The protein belongs to the glutathione peroxidase family. In terms of assembly, homotetramer.

It is found in the secreted. It carries out the reaction 2 glutathione + H2O2 = glutathione disulfide + 2 H2O. Could inhibit the oxidative burst of leukocytes and neutralize the secondary products of lipid peroxidation, thus providing the resistance of these parasites to immune effector mechanisms and their persistence in the mammalian host. It may also be involved in the formation of cross-linking residues such as dityrosine, trityrosine and isotrityrosine identified in cuticular collagen. Highly cross-linked external cortex may also serve to protect the parasite from immune attack. The protein is Cuticular glutathione peroxidase of Wuchereria bancrofti.